We begin with the raw amino-acid sequence, 798 residues long: MLQNVTPHKLPGEGNAGLLGLGPEAAAPGKRIRKPSLLYEGFESPTMASVPALQLAPANPPPPEVSNPKKPGRVTNQLQYLHKVVMKALWKHQFAWPFRQPVDAVKLGLPDYHKIIKQPMDMGTIKRRLENNYYWAASECMQDFNTMFTNCYIYNKPTDDIVLMAQTLEKIFLQKVASMPQEEQELVVTIPKNSHKKGAKLAALQGSITSAHQVPAVSSVSHTALYTPPPEIPTTVLNIPHPSVISSPLLKSLHSAGPPLLAVSAAPPAQPLAKKKGVKRKADTTTPTPTAILAPGSPASPPGSLEPKAARLPPMRRESGRPIKPPRKDLPDSQQQHQSSKKGKLSEQLKHCNGILKELLSKKHAAYAWPFYKPVDASALGLHDYHDIIKHPMDLSTVKRKMENRDYRDAQEFAADVRLMFSNCYKYNPPDHDVVAMARKLQDVFEFRYAKMPDEPLEPGPLPVSTALPPGLTKSSSESSSEESSSESSSEEEEEEEEDEDEEESESSDSEEERAHRLAELQEQLRAVHEQLAALSQGPISKPKRKREKKEKKKKRKAEKHRGRIGIDEDDKGPRAPRPPQPKKSKKAGGGGSNATTLSHPGFGTSGGSSNKLPKKSQKTAPPVLPTGYDSEEEEESRPMSYDEKRQLSLDINKLPGEKLGRVVHIIQAREPSLRDSNPEEIEIDFETLKPSTLRELERYVLSCLRKKPRKPYTIRKPVGKTKEELALEKKRELEKRLQDVSGQLNSTKKPPKKASEKTESSAQQVAVSRLSASSSSSDSSSSSSSSSSSDTSDSDSG.

Position 1 is an N-acetylmethionine (methionine 1). Residues 1–21 (MLQNVTPHKLPGEGNAGLLGL) are disordered. Threonine 6 bears the Phosphothreonine mark. Position 36 is a phosphoserine (serine 36). A disordered region spans residues 53-72 (LQLAPANPPPPEVSNPKKPG). The 107-residue stretch at 73–179 (RVTNQLQYLH…KIFLQKVASM (107 aa)) folds into the Bromo 1 domain. The a protein site is built by aspartate 111, tyrosine 154, asparagine 155, lysine 156, aspartate 159, and aspartate 160. Disordered regions lie at residues 267-348 (PPAQ…LSEQ), 454-645 (DEPL…YDEK), and 736-798 (KRLQ…SDSG). Residues 284 to 297 (TTTPTPTAILAPGS) are compositionally biased toward low complexity. 3 positions are modified to phosphoserine: serine 297, serine 300, and serine 304. Positions 315-331 (MRRESGRPIKPPRKDLP) are enriched in basic and acidic residues. In terms of domain architecture, Bromo 2 spans 343–452 (GKLSEQLKHC…DVFEFRYAKM (110 aa)). Residues 480-512 (SSEESSSESSSEEEEEEEEDEDEEESESSDSEE) show a composition bias toward acidic residues. Residues 542–564 (KPKRKREKKEKKKKRKAEKHRGR) are compositionally biased toward basic residues. The short motif at 553–557 (KKKRK) is the Nuclear localization signal element. The NET domain maps to 630–712 (DSEEEEESRP…SCLRKKPRKP (83 aa)). Serine 631 carries the post-translational modification Phosphoserine. Residues 772-792 (SASSSSSDSSSSSSSSSSSDT) show a composition bias toward low complexity.

The protein belongs to the BET family. In terms of assembly, homodimer. Interacts with E2F1. Interacts with (acetylated) STAT3; promoting STAT3 recruitment to chromatin. Interacts with CTCF; promoting BRD2 recruitment to chromatin. As to expression, predominantly expressed in the testis, followed by ovary, placenta, embryo and to a lower extent in somatic tissues.

Its subcellular location is the nucleus. It localises to the chromosome. Chromatin reader protein that specifically recognizes and binds histone H4 acetylated at 'Lys-5' and 'Lys-12' (H4K5ac and H4K12ac, respectively), thereby controlling gene expression and remodeling chromatin structures. Recruits transcription factors and coactivators to target gene sites, and activates RNA polymerase II machinery for transcriptional elongation. Plays a key role in genome compartmentalization via its association with CTCF and cohesin: recruited to chromatin by CTCF and promotes formation of topologically associating domains (TADs) via its ability to bind acetylated histones, contributing to CTCF boundary formation and enhancer insulation. Also recognizes and binds acetylated non-histone proteins, such as STAT3. Involved in inflammatory response by regulating differentiation of naive CD4(+) T-cells into T-helper Th17: recognizes and binds STAT3 acetylated at 'Lys-87', promoting STAT3 recruitment to chromatin. In addition to acetylated lysines, also recognizes and binds lysine residues on histones that are both methylated and acetylated on the same side chain to form N6-acetyl-N6-methyllysine (Kacme), an epigenetic mark of active chromatin associated with increased transcriptional initiation. Specifically binds histone H4 acetyl-methylated at 'Lys-5' and 'Lys-12' (H4K5acme and H4K12acme, respectively). In Mus musculus (Mouse), this protein is Bromodomain-containing protein 2.